Consider the following 331-residue polypeptide: 6-phosphogluconolactonase (331 aa).

The protein belongs to the cycloisomerase 2 family.

The enzyme catalyses 6-phospho-D-glucono-1,5-lactone + H2O = 6-phospho-D-gluconate + H(+). It participates in carbohydrate degradation; pentose phosphate pathway; D-ribulose 5-phosphate from D-glucose 6-phosphate (oxidative stage): step 2/3. Its function is as follows. Catalyzes the hydrolysis of 6-phosphogluconolactone to 6-phosphogluconate. The sequence is that of 6-phosphogluconolactonase from Serratia proteamaculans (strain 568).